A 407-amino-acid polypeptide reads, in one-letter code: Carbamoyl phosphate synthase small chain (407 aa).

The interval 1–203 (MSQNESGTIA…EPCGEYEGKE (203 aa)) is CPSase. L-glutamine is bound by residues Ser-61, Gly-255, and Gly-257. Residues 207-405 (TVAAVDLGIK…CELMKNNSKE (199 aa)) form the Glutamine amidotransferase type-1 domain. Cys-283 serves as the catalytic Nucleophile. Phe-284, Gln-287, Asn-325, Gly-327, and Phe-328 together coordinate L-glutamine. Active-site residues include His-378 and Glu-380.

This sequence belongs to the CarA family. Composed of two chains; the small (or glutamine) chain promotes the hydrolysis of glutamine to ammonia, which is used by the large (or ammonia) chain to synthesize carbamoyl phosphate. Tetramer of heterodimers (alpha,beta)4.

The catalysed reaction is hydrogencarbonate + L-glutamine + 2 ATP + H2O = carbamoyl phosphate + L-glutamate + 2 ADP + phosphate + 2 H(+). It catalyses the reaction L-glutamine + H2O = L-glutamate + NH4(+). The protein operates within amino-acid biosynthesis; L-arginine biosynthesis; carbamoyl phosphate from bicarbonate: step 1/1. It functions in the pathway pyrimidine metabolism; UMP biosynthesis via de novo pathway; (S)-dihydroorotate from bicarbonate: step 1/3. Small subunit of the glutamine-dependent carbamoyl phosphate synthetase (CPSase). CPSase catalyzes the formation of carbamoyl phosphate from the ammonia moiety of glutamine, carbonate, and phosphate donated by ATP, constituting the first step of 2 biosynthetic pathways, one leading to arginine and/or urea and the other to pyrimidine nucleotides. The small subunit (glutamine amidotransferase) binds and cleaves glutamine to supply the large subunit with the substrate ammonia. The chain is Carbamoyl phosphate synthase small chain from Bifidobacterium longum (strain DJO10A).